The chain runs to 299 residues: Sulfotransferase 1B1 (299 aa).

48–53 contributes to the 3'-phosphoadenylyl sulfate binding site; it reads KSGTTW. 107–109 lines the substrate pocket; sequence KTH. Catalysis depends on H109, which acts as the Proton acceptor. Residues R131, S139, Y194, 228–233, and 258–260 each bind 3'-phosphoadenylyl sulfate; these read TSFEMM and RKG.

Belongs to the sulfotransferase 1 family. Liver specific.

The protein resides in the cytoplasm. It carries out the reaction a phenol + 3'-phosphoadenylyl sulfate = an aryl sulfate + adenosine 3',5'-bisphosphate + H(+). The catalysed reaction is 3,3',5-triiodo-L-thyronine + 3'-phosphoadenylyl sulfate = 3,3',5-triiodo-L-thyronine sulfate + adenosine 3',5'-bisphosphate + H(+). The enzyme catalyses 3,3',5'-triiodo-L-thyronine + 3'-phosphoadenylyl sulfate = 3,3',5'-triiodo-L-thyronine sulfate + adenosine 3',5'-bisphosphate + H(+). It catalyses the reaction 3,3'-diiodo-L-thyronine + 3'-phosphoadenylyl sulfate = 3,3'-diiodo-L-thyronine sulfate + adenosine 3',5'-bisphosphate + H(+). It carries out the reaction dopamine + 3'-phosphoadenylyl sulfate = dopamine 3-O-sulfate + adenosine 3',5'-bisphosphate + H(+). The catalysed reaction is dopamine + 3'-phosphoadenylyl sulfate = dopamine 4-O-sulfate + adenosine 3',5'-bisphosphate + H(+). The enzyme catalyses 4-ethylphenol + 3'-phosphoadenylyl sulfate = 4-ethylphenyl sulfate + adenosine 3',5'-bisphosphate + H(+). Sulfotransferase that utilizes 3'-phospho-5'-adenylyl sulfate (PAPS) as sulfonate donor to catalyze the sulfate conjugation of dopamine, small phenols such as 1-naphthol and p-nitrophenol and thyroid hormones, including 3,3'-diiodothyronine, triidothyronine (T3) and reverse triiodothyronine (rT3). May play a role in gut microbiota-host metabolic interaction. O-sulfonates 4-ethylphenol (4-EP), a dietary tyrosine-derived metabolite produced by gut bacteria. The product 4-EPS crosses the blood-brain barrier and may negatively regulate oligodendrocyte maturation and myelination, affecting the functional connectivity of different brain regions associated with the limbic system. This chain is Sulfotransferase 1B1, found in Mus musculus (Mouse).